The following is a 114-amino-acid chain: Putative pterin-4-alpha-carbinolamine dehydratase (114 aa).

The protein belongs to the pterin-4-alpha-carbinolamine dehydratase family.

It catalyses the reaction (4aS,6R)-4a-hydroxy-L-erythro-5,6,7,8-tetrahydrobiopterin = (6R)-L-erythro-6,7-dihydrobiopterin + H2O. The chain is Putative pterin-4-alpha-carbinolamine dehydratase from Methylococcus capsulatus (strain ATCC 33009 / NCIMB 11132 / Bath).